The chain runs to 1004 residues: 2-oxoglutarate dehydrogenase E1 component (1004 aa).

This sequence belongs to the alpha-ketoglutarate dehydrogenase family. Homodimer. Part of the 2-oxoglutarate dehydrogenase (OGDH) complex composed of E1 (2-oxoglutarate dehydrogenase), E2 (dihydrolipoamide succinyltransferase) and E3 (dihydrolipoamide dehydrogenase); the complex contains multiple copies of the three enzymatic components (E1, E2 and E3). The cofactor is thiamine diphosphate.

The enzyme catalyses N(6)-[(R)-lipoyl]-L-lysyl-[protein] + 2-oxoglutarate + H(+) = N(6)-[(R)-S(8)-succinyldihydrolipoyl]-L-lysyl-[protein] + CO2. Functionally, E1 component of the 2-oxoglutarate dehydrogenase (OGDH) complex which catalyzes the decarboxylation of 2-oxoglutarate, the first step in the conversion of 2-oxoglutarate to succinyl-CoA and CO(2). The polypeptide is 2-oxoglutarate dehydrogenase E1 component (Brucella melitensis biotype 2 (strain ATCC 23457)).